Here is a 74-residue protein sequence, read N- to C-terminus: Guanine nucleotide-binding protein G(T) subunit gamma-T1 (74 aa).

Cysteine 71 bears the Cysteine methyl ester mark. The S-farnesyl cysteine moiety is linked to residue cysteine 71. The propeptide at 72-74 (VIS) is removed in mature form.

It belongs to the G protein gamma family. G proteins are composed of 3 units, alpha, beta and gamma. In terms of tissue distribution, retinal rod outer segment.

The protein localises to the cell membrane. Guanine nucleotide-binding proteins (G proteins) are involved as a modulator or transducer in various transmembrane signaling systems. The beta and gamma chains are required for the GTPase activity, for replacement of GDP by GTP, and for G protein-effector interaction. The chain is Guanine nucleotide-binding protein G(T) subunit gamma-T1 (Gngt1) from Mus musculus (Mouse).